We begin with the raw amino-acid sequence, 269 residues long: Probable sulfate transport system permease protein cysT (269 aa).

The next 7 membrane-spanning stretches (helical) occupy residues 10-30 (SWRI…LALL), 60-80 (MALI…WILV), 92-112 (AAID…LATV), 130-150 (VVFT…PFVV), 179-199 (FWKV…ALAF), 208-228 (SVVI…VLIF), and 240-260 (TVIG…INII). Residues 54-255 (YSITLSMALI…ILSISLFILV (202 aa)) form the ABC transmembrane type-1 domain.

Belongs to the binding-protein-dependent transport system permease family. CysTW subfamily.

Its subcellular location is the plastid. The protein localises to the chloroplast membrane. Functionally, part of the ABC transporter complex cysAWTP (TC 3.A.1.6.1) involved in sulfate/thiosulfate import. Probably responsible for the translocation of the substrate across the membrane. This Mesostigma viride (Green alga) protein is Probable sulfate transport system permease protein cysT (cysT).